A 353-amino-acid chain; its full sequence is Photosystem II D2 protein (353 aa).

Thr-2 bears the N-acetylthreonine mark. Thr-2 is modified (phosphothreonine). The chain crosses the membrane as a helical span at residues 41-61 (CAYFALGGWFTGTTFVTSWYT). Residue His-118 coordinates chlorophyll a. Residues 125-141 (GFMLRQFELARSVQLRP) form a helical membrane-spanning segment. Pheophytin a contacts are provided by Gln-130 and Asn-143. A helical membrane pass occupies residues 153-166 (VFVSVFLIYPLGQS). His-198 provides a ligand contact to chlorophyll a. Residues 208–228 (AALLCAIHGATVENTLFEDGD) form a helical membrane-spanning segment. The a plastoquinone site is built by His-215 and Phe-262. His-215 is a Fe cation binding site. His-269 serves as a coordination point for Fe cation. Residues 279 to 295 (GLWMSALGVVGLALNLR) traverse the membrane as a helical segment.

This sequence belongs to the reaction center PufL/M/PsbA/D family. In terms of assembly, PSII is composed of 1 copy each of membrane proteins PsbA, PsbB, PsbC, PsbD, PsbE, PsbF, PsbH, PsbI, PsbJ, PsbK, PsbL, PsbM, PsbT, PsbX, PsbY, PsbZ, Psb30/Ycf12, at least 3 peripheral proteins of the oxygen-evolving complex and a large number of cofactors. It forms dimeric complexes. It depends on The D1/D2 heterodimer binds P680, chlorophylls that are the primary electron donor of PSII, and subsequent electron acceptors. It shares a non-heme iron and each subunit binds pheophytin, quinone, additional chlorophylls, carotenoids and lipids. There is also a Cl(-1) ion associated with D1 and D2, which is required for oxygen evolution. The PSII complex binds additional chlorophylls, carotenoids and specific lipids. as a cofactor.

The protein resides in the plastid. Its subcellular location is the chloroplast thylakoid membrane. It catalyses the reaction 2 a plastoquinone + 4 hnu + 2 H2O = 2 a plastoquinol + O2. Photosystem II (PSII) is a light-driven water:plastoquinone oxidoreductase that uses light energy to abstract electrons from H(2)O, generating O(2) and a proton gradient subsequently used for ATP formation. It consists of a core antenna complex that captures photons, and an electron transfer chain that converts photonic excitation into a charge separation. The D1/D2 (PsbA/PsbD) reaction center heterodimer binds P680, the primary electron donor of PSII as well as several subsequent electron acceptors. D2 is needed for assembly of a stable PSII complex. The polypeptide is Photosystem II D2 protein (Spinacia oleracea (Spinach)).